Reading from the N-terminus, the 25-residue chain is Non-specific lipid-transfer protein 3 (25 aa).

Seeds (at protein level).

Plant non-specific lipid-transfer proteins transfer phospholipids as well as galactolipids across membranes. May play a role in wax or cutin deposition in the cell walls of expanding epidermal cells and certain secretory tissues. Has antibacterial and antifungal activity. Displays antibacterial activity towards both Gram-negative bacteria, P.carotovorum (IC(50)=11.5 uM) and P.syringae (IC(50)=12.0 uM), and Gram-positive bacterium C.michiganensis subsp michiganense (IC(50)=11.2 uM). Also displays antifungal activity towards A.niger VKM F-33 (IC(50)=1.05 uM) and B.cinerea TSKHA (IC(50)=1.88 uM) and relatively moderate activity towards B.sorokiniana VKM F-1448 (IC(50)=1.55 uM). Displays some inhibitory activity towards P.infestans OSV12. The polypeptide is Non-specific lipid-transfer protein 3 (Nigella sativa (Black cumin)).